Reading from the N-terminus, the 427-residue chain is 3-phosphoshikimate 1-carboxyvinyltransferase (427 aa).

3-phosphoshikimate is bound by residues K20, S21, and R25. K20 is a phosphoenolpyruvate binding site. G92 and R120 together coordinate phosphoenolpyruvate. Positions 166, 168, 312, and 339 each coordinate 3-phosphoshikimate. Residue Q168 coordinates phosphoenolpyruvate. Catalysis depends on D312, which acts as the Proton acceptor. Positions 343 and 385 each coordinate phosphoenolpyruvate.

The protein belongs to the EPSP synthase family. As to quaternary structure, monomer.

It is found in the cytoplasm. It catalyses the reaction 3-phosphoshikimate + phosphoenolpyruvate = 5-O-(1-carboxyvinyl)-3-phosphoshikimate + phosphate. The protein operates within metabolic intermediate biosynthesis; chorismate biosynthesis; chorismate from D-erythrose 4-phosphate and phosphoenolpyruvate: step 6/7. Its function is as follows. Catalyzes the transfer of the enolpyruvyl moiety of phosphoenolpyruvate (PEP) to the 5-hydroxyl of shikimate-3-phosphate (S3P) to produce enolpyruvyl shikimate-3-phosphate and inorganic phosphate. This is 3-phosphoshikimate 1-carboxyvinyltransferase from Streptococcus uberis (strain ATCC BAA-854 / 0140J).